We begin with the raw amino-acid sequence, 91 residues long: MARMIHCAKLGKEAEGLDFPPLPGELGKRLYESVSKQAWQDWLKQQTMLINENRLNMADPRARQYLMKQTEKYFFGEGADQASGYVPPAQG.

Belongs to the Fe(2+)-trafficking protein family.

Functionally, could be a mediator in iron transactions between iron acquisition and iron-requiring processes, such as synthesis and/or repair of Fe-S clusters in biosynthetic enzymes. The chain is Probable Fe(2+)-trafficking protein from Burkholderia mallei (strain NCTC 10247).